A 550-amino-acid polypeptide reads, in one-letter code: Metal transporter Nramp4 (550 aa).

Basic and acidic residues predominate over residues 1 to 13 (MEEGAKIGREHEQ). Positions 1–37 (MEEGAKIGREHEQQQQQHGRVNGSGRVAAVGGGSGGG) are disordered. Residues 14-29 (QQQQHGRVNGSGRVAA) show a composition bias toward low complexity. The next 12 membrane-spanning stretches (helical) occupy residues 72 to 92 (FLAH…PSNL), 105 to 125 (SLLW…SLAA), 151 to 171 (LWLL…LGTA), 177 to 197 (LLHI…FLIL), 207 to 227 (MEFT…MELG), 255 to 275 (VAMF…SLVL), 292 to 312 (FFLL…VAIV), 354 to 374 (VYGV…SYAG), 388 to 408 (IIYL…CSIG), 416 to 436 (IINI…IPLI), 457 to 477 (IAWI…CTSF), and 492 to 512 (AIIS…LIYL).

The protein belongs to the NRAMP (TC 2.A.55) family.

Its subcellular location is the membrane. Functionally, probable metal transporter. This is Metal transporter Nramp4 (NRAMP4) from Oryza sativa subsp. japonica (Rice).